Consider the following 396-residue polypeptide: Argininosuccinate synthase (396 aa).

6–14 (AYSGGLDTS) is a binding site for ATP. Y83 is an L-citrulline binding site. Position 113 (G113) interacts with ATP. Residues T115, N119, and D120 each coordinate L-aspartate. N119 lines the L-citrulline pocket. 5 residues coordinate L-citrulline: R123, S171, S180, E256, and Y268.

The protein belongs to the argininosuccinate synthase family. Type 1 subfamily. As to quaternary structure, homotetramer.

Its subcellular location is the cytoplasm. The catalysed reaction is L-citrulline + L-aspartate + ATP = 2-(N(omega)-L-arginino)succinate + AMP + diphosphate + H(+). It participates in amino-acid biosynthesis; L-arginine biosynthesis; L-arginine from L-ornithine and carbamoyl phosphate: step 2/3. This is Argininosuccinate synthase from Hyperthermus butylicus (strain DSM 5456 / JCM 9403 / PLM1-5).